The sequence spans 416 residues: uncharacterized protein (416 aa).

The interval 341 to 360 (EDREKGSQHTNNTHHHKRNL) is disordered.

This is an uncharacterized protein from Human cytomegalovirus (strain AD169) (HHV-5).